The sequence spans 479 residues: Aspartyl/glutamyl-tRNA(Asn/Gln) amidotransferase subunit B (479 aa).

Belongs to the GatB/GatE family. GatB subfamily. In terms of assembly, heterotrimer of A, B and C subunits.

It catalyses the reaction L-glutamyl-tRNA(Gln) + L-glutamine + ATP + H2O = L-glutaminyl-tRNA(Gln) + L-glutamate + ADP + phosphate + H(+). The catalysed reaction is L-aspartyl-tRNA(Asn) + L-glutamine + ATP + H2O = L-asparaginyl-tRNA(Asn) + L-glutamate + ADP + phosphate + 2 H(+). Functionally, allows the formation of correctly charged Asn-tRNA(Asn) or Gln-tRNA(Gln) through the transamidation of misacylated Asp-tRNA(Asn) or Glu-tRNA(Gln) in organisms which lack either or both of asparaginyl-tRNA or glutaminyl-tRNA synthetases. The reaction takes place in the presence of glutamine and ATP through an activated phospho-Asp-tRNA(Asn) or phospho-Glu-tRNA(Gln). This Mycoplasma mycoides subsp. mycoides SC (strain CCUG 32753 / NCTC 10114 / PG1) protein is Aspartyl/glutamyl-tRNA(Asn/Gln) amidotransferase subunit B.